We begin with the raw amino-acid sequence, 420 residues long: Glutamate dehydrogenase (420 aa).

Lys105 is an active-site residue. Position 220 to 226 (220 to 226 (GYGNAGY)) interacts with NAD(+).

Belongs to the Glu/Leu/Phe/Val dehydrogenases family. Homohexamer.

Its subcellular location is the cytoplasm. It catalyses the reaction L-glutamate + NAD(+) + H2O = 2-oxoglutarate + NH4(+) + NADH + H(+). The catalysed reaction is L-glutamate + NADP(+) + H2O = 2-oxoglutarate + NH4(+) + NADPH + H(+). This Pyrococcus abyssi (strain GE5 / Orsay) protein is Glutamate dehydrogenase (gdhA).